Here is a 461-residue protein sequence, read N- to C-terminus: Photosystem II CP43 reaction center protein (461 aa).

Residues Met-1–Glu-2 constitute a propeptide that is removed on maturation. N-acetylthreonine is present on Thr-3. Thr-3 carries the post-translational modification Phosphothreonine. The next 5 membrane-spanning stretches (helical) occupy residues Leu-57–Ala-81, Leu-122–Asn-143, Lys-166–Thr-188, Lys-243–Ser-263, and Trp-279–Ala-300. Glu-355 contacts [CaMn4O5] cluster. A helical membrane pass occupies residues Arg-435 to Pro-459.

It belongs to the PsbB/PsbC family. PsbC subfamily. As to quaternary structure, PSII is composed of 1 copy each of membrane proteins PsbA, PsbB, PsbC, PsbD, PsbE, PsbF, PsbH, PsbI, PsbJ, PsbK, PsbL, PsbM, PsbT, PsbX, PsbY, PsbZ, Psb30/Ycf12, at least 3 peripheral proteins of the oxygen-evolving complex and a large number of cofactors. It forms dimeric complexes. Requires Binds multiple chlorophylls and provides some of the ligands for the Ca-4Mn-5O cluster of the oxygen-evolving complex. It may also provide a ligand for a Cl- that is required for oxygen evolution. PSII binds additional chlorophylls, carotenoids and specific lipids. as cofactor.

The protein localises to the plastid. The protein resides in the chloroplast thylakoid membrane. Functionally, one of the components of the core complex of photosystem II (PSII). It binds chlorophyll and helps catalyze the primary light-induced photochemical processes of PSII. PSII is a light-driven water:plastoquinone oxidoreductase, using light energy to abstract electrons from H(2)O, generating O(2) and a proton gradient subsequently used for ATP formation. The polypeptide is Photosystem II CP43 reaction center protein (Platanus occidentalis (Sycamore)).